The following is a 73-amino-acid chain: Sec-independent protein translocase protein TatA (73 aa).

The helical transmembrane segment at 1 to 21 (MGSFSIWHWLIVLVIVMLVFG) threads the bilayer. The interval 44–73 (KSAEDPNEQIPQSTTTAEKTVDVQAKDINK) is disordered. Residues 52-61 (QIPQSTTTAE) show a composition bias toward polar residues. The span at 62–73 (KTVDVQAKDINK) shows a compositional bias: basic and acidic residues.

This sequence belongs to the TatA/E family. In terms of assembly, the Tat system comprises two distinct complexes: a TatABC complex, containing multiple copies of TatA, TatB and TatC subunits, and a separate TatA complex, containing only TatA subunits. Substrates initially bind to the TatABC complex, which probably triggers association of the separate TatA complex to form the active translocon.

Its subcellular location is the cell inner membrane. In terms of biological role, part of the twin-arginine translocation (Tat) system that transports large folded proteins containing a characteristic twin-arginine motif in their signal peptide across membranes. TatA could form the protein-conducting channel of the Tat system. This is Sec-independent protein translocase protein TatA from Polynucleobacter asymbioticus (strain DSM 18221 / CIP 109841 / QLW-P1DMWA-1) (Polynucleobacter necessarius subsp. asymbioticus).